We begin with the raw amino-acid sequence, 330 residues long: MDTIVTPSDHRAEGEAVSTASPRDYFDLMKPRVMTLVVFTAFAGLIAAPVDADPFLAFMSILCLAVGAGAAGALNMAYDADIDATMQRTRKRPIPRGVVSVSNAYGFGVVASILSVLLMALASNYLAAGLLAFSIFFYAVIYTMILKRSTPQNIVIGGAAGAFPPMIGWVAATGEISLDAVILFMIIFLWTPPHSWALALYKSGDYAAANVPMMPVAKGAKSTRLQILLYSIVLVIFAGAPVLTGLGGAVYGATSLGGGALFLLLAWRIFRSRAGEAGSAEEGALYAVRAGDKAARDLFAYSIGYLTVLFAALIVEHAFGAYVAIPGVSP.

Helical transmembrane passes span valine 33–aspartate 53, proline 54–leucine 74, valine 101–leucine 121, leucine 126–leucine 146, isoleucine 154–glycine 174, alanine 180–leucine 200, isoleucine 227–glycine 247, valine 250–phenylalanine 270, and valine 308–valine 328.

It belongs to the UbiA prenyltransferase family. Protoheme IX farnesyltransferase subfamily. As to quaternary structure, interacts with CtaA.

It localises to the cell inner membrane. It catalyses the reaction heme b + (2E,6E)-farnesyl diphosphate + H2O = Fe(II)-heme o + diphosphate. It participates in porphyrin-containing compound metabolism; heme O biosynthesis; heme O from protoheme: step 1/1. Its function is as follows. Converts heme B (protoheme IX) to heme O by substitution of the vinyl group on carbon 2 of heme B porphyrin ring with a hydroxyethyl farnesyl side group. This Maricaulis maris (strain MCS10) (Caulobacter maris) protein is Protoheme IX farnesyltransferase.